The following is a 231-amino-acid chain: Phosphatidylserine decarboxylase proenzyme (231 aa).

Serine 188 acts as the Schiff-base intermediate with substrate; via pyruvic acid in catalysis. Pyruvic acid (Ser); by autocatalysis is present on serine 188.

The protein belongs to the phosphatidylserine decarboxylase family. PSD-A subfamily. As to quaternary structure, heterodimer of a large membrane-associated beta subunit and a small pyruvoyl-containing alpha subunit. Pyruvate is required as a cofactor. In terms of processing, is synthesized initially as an inactive proenzyme. Formation of the active enzyme involves a self-maturation process in which the active site pyruvoyl group is generated from an internal serine residue via an autocatalytic post-translational modification. Two non-identical subunits are generated from the proenzyme in this reaction, and the pyruvate is formed at the N-terminus of the alpha chain, which is derived from the carboxyl end of the proenzyme. The post-translation cleavage follows an unusual pathway, termed non-hydrolytic serinolysis, in which the side chain hydroxyl group of the serine supplies its oxygen atom to form the C-terminus of the beta chain, while the remainder of the serine residue undergoes an oxidative deamination to produce ammonia and the pyruvoyl prosthetic group on the alpha chain.

Its subcellular location is the cell membrane. The catalysed reaction is a 1,2-diacyl-sn-glycero-3-phospho-L-serine + H(+) = a 1,2-diacyl-sn-glycero-3-phosphoethanolamine + CO2. Its pathway is phospholipid metabolism; phosphatidylethanolamine biosynthesis; phosphatidylethanolamine from CDP-diacylglycerol: step 2/2. Catalyzes the formation of phosphatidylethanolamine (PtdEtn) from phosphatidylserine (PtdSer). The chain is Phosphatidylserine decarboxylase proenzyme from Rickettsia africae (strain ESF-5).